We begin with the raw amino-acid sequence, 293 residues long: uncharacterized protein (293 aa).

Disordered regions lie at residues 121 to 154 (NLNF…SQNS) and 254 to 274 (DILQ…PQQQ). Basic residues predominate over residues 133-149 (SYHHHSHSHSHHSHSHS). The segment covering 260–272 (PPSPTPTPPPPPQ) has biased composition (pro residues).

This is an uncharacterized protein from Dictyostelium discoideum (Social amoeba).